The following is a 162-amino-acid chain: Caveolin-2 (162 aa).

Residues 1–86 (MGLETEKADV…FEISKYVMYK (86 aa)) lie on the Cytoplasmic side of the membrane. Phosphotyrosine; by SRC is present on Tyr-19. Ser-20 and Ser-23 each carry phosphoserine. Tyr-27 is subject to Phosphotyrosine; by SRC. Residue Ser-36 is modified to Phosphoserine. The helical intramembrane region spans 87–107 (FLTVFLAIPLAFIAGILFATL). Residues 108-162 (SCLHIWILMPFVKTCLMVLPSVQTIWKSVTDVFIAPLCTSVGRSFSSVSLQLSQD) lie on the Cytoplasmic side of the membrane.

Belongs to the caveolin family. As to quaternary structure, monomer or homodimer. Interacts with CAV1; the interaction forms a stable heterooligomeric complex that is required for targeting to lipid rafts and for caveolae formation. Tyrosine phosphorylated forms do not form heterooligomers with the Tyr-19-phosphorylated form existing as a monomer or dimer, and the Tyr-27-form as a monomer only. Interacts (tyrosine phosphorylated form) with the SH2 domain-containing proteins, RASA1, NCK1 and SRC. Interacts (tyrosine phosphorylated form) with INSR, the interaction (Tyr-27-phosphorylated form) is increased on insulin stimulation. Interacts (Tyr-19 phosphorylated form) with MAPK1 (phosphorylated form); the interaction, promoted by insulin, leads to nuclear location and MAPK1 activation. Interacts with STAT3; the interaction is increased on insulin-induced tyrosine phosphorylation leading to STAT activation. Post-translationally, phosphorylated on serine and tyrosine residues. CAV1 promotes phosphorylation on Ser-23 which then targets the complex to the plasma membrane, lipid rafts and caveolae. Phosphorylation on Ser-36 appears to modulate mitosis in endothelial cells. Phosphorylation on both Tyr-19 and Tyr-27 is required for insulin-induced 'Ser-727' phosphorylation of STAT3 and its activation. Phosphorylation on Tyr-19 is required for insulin-induced phosphorylation of MAPK1 and DNA binding of STAT3. Tyrosine phosphorylation is induced by both EGF and insulin (By. similarity).

It is found in the nucleus. The protein resides in the cytoplasm. It localises to the golgi apparatus membrane. Its subcellular location is the cell membrane. The protein localises to the membrane. It is found in the caveola. Its function is as follows. May act as a scaffolding protein within caveolar membranes. Interacts directly with G-protein alpha subunits and can functionally regulate their activity. Acts as an accessory protein in conjunction with CAV1 in targeting to lipid rafts and driving caveolae formation. The Ser-36 phosphorylated form has a role in modulating mitosis in endothelial cells. Positive regulator of cellular mitogenesis of the MAPK signaling pathway. Required for the insulin-stimulated nuclear translocation and activation of MAPK1 and STAT3, and the subsequent regulation of cell cycle progression. The protein is Caveolin-2 (CAV2) of Chlorocebus aethiops (Green monkey).